The following is an 894-amino-acid chain: CWF19-like protein 2 (894 aa).

The segment at 1-147 is disordered; that stretch reads MATSMAAASG…DEKSGKDDTQ (147 aa). Residues 13–56 are compositionally biased toward basic and acidic residues; it reads ESAKSIEERKEQTRNARAEVLRQAKANFEKEERRKELKRLRGED. A coiled-coil region spans residues 13-107; sequence ESAKSIEERK…KKQKYEKNNE (95 aa). A Phosphoserine modification is found at Ser-75. Basic residues predominate over residues 76–99; it reads VKKKKKKDKHSKKAKKEKKKKSKK. Positions 128–147 are enriched in basic and acidic residues; that stretch reads PDKEKAWKVKDEKSGKDDTQ. Residues 166-281 adopt a coiled-coil conformation; sequence SSSSLKAEKE…AEKAASTKED (116 aa). Residue Lys-171 forms a Glycyl lysine isopeptide (Lys-Gly) (interchain with G-Cter in SUMO2) linkage. A compositionally biased stretch (basic and acidic residues) spans 270–284; sequence EDAEKAASTKEDYRR. Positions 270–483 are disordered; sequence EDAEKAASTK…STFAGSPERE (214 aa). Residues 320–330 are compositionally biased toward polar residues; sequence TTDTAKNSNNE. The span at 332–352 shows a compositional bias: basic and acidic residues; the sequence is FIGDEKDKRPGSLETCRRESN. A phosphoserine mark is found at Ser-360 and Ser-372. Composition is skewed to basic and acidic residues over residues 410-430 and 440-473; these read KNSEERLTSWSRSDGRGDKKH and TDEHQHVPEDPREKSQDEVLRDDPPKKEHLRDTK. 2 positions are modified to phosphoserine: Ser-479 and Ser-484. A coiled-coil region spans residues 502–530; sequence KAEMMGNMELAEQLKVQLEKANKFKETIT. The segment at 561–583 is disordered; it reads NTPGKSLESQGGRRKRQMVSTHE. Lys-604 is covalently cross-linked (Glycyl lysine isopeptide (Lys-Gly) (interchain with G-Cter in SUMO2)). Residues 644–675 adopt a coiled-coil conformation; that stretch reads AAERERLGEEEENQRKKAIAEHRSLAAQMEKC.

Belongs to the CWF19 family.

The polypeptide is CWF19-like protein 2 (CWF19L2) (Homo sapiens (Human)).